We begin with the raw amino-acid sequence, 138 residues long: Small ribosomal subunit protein uS12 (138 aa).

A 3-methylthioaspartic acid modification is found at Asp89. The interval 107 to 138 (VSGRMQRRSKYGAKFPKTGTGKTKAVPTKNKK) is disordered.

The protein belongs to the universal ribosomal protein uS12 family. In terms of assembly, part of the 30S ribosomal subunit. Contacts proteins S8 and S17. May interact with IF1 in the 30S initiation complex.

In terms of biological role, with S4 and S5 plays an important role in translational accuracy. Functionally, interacts with and stabilizes bases of the 16S rRNA that are involved in tRNA selection in the A site and with the mRNA backbone. Located at the interface of the 30S and 50S subunits, it traverses the body of the 30S subunit contacting proteins on the other side and probably holding the rRNA structure together. The combined cluster of proteins S8, S12 and S17 appears to hold together the shoulder and platform of the 30S subunit. The protein is Small ribosomal subunit protein uS12 of Azobacteroides pseudotrichonymphae genomovar. CFP2.